A 539-amino-acid chain; its full sequence is MHDKILILDFGSQVTQLIARRVREAHVYCEIHPNDVSDEFVREYAPKGIILSGSHASTYEDHQLRAPQAVWDLGVPVLGICYGMQTMAVQLGGKVEWSDHREFGYAEVRAHGHTPLLKDIEDFSTAEGHGMLKVWMSHGDKVAALPPGFKLMASTPSCPIAGMADEARGYYAVQFHPEVTHTSKGREMIERFVLGICRAKADWVMKDHIEEAVALIRKQVGDEEVILGLSGGVDSSVAAALIHRAIGDQLTCVFVDHGLLRLDEGKMVMDMFAGRLHAKVVHIDASEQFLGHLAGVTDPEQKRKIIGREFVEVFQAEAKKLSNAKWLAQGTIYPDVVESGGTKTKKATTIKSHHNVGGLPETLGLKLLEPLRDLFKDEVRQLGVALGLPPEMVYRHPFPGPGLGVRILGEVKRDYADLLRRADAIFIEELRKTIATEQDAAAGLCEPQQVGKSWYDLTSQAFAVFLPVKSVGVMGDGRTYDYVVALRAVQTTDFMTAHWAHLPYSLLGRCSNRIINEVRGLNRVVYDVSGKPPATIEWE.

One can recognise a Glutamine amidotransferase type-1 domain in the interval 4–202 (KILILDFGSQ…VLGICRAKAD (199 aa)). The Nucleophile role is filled by cysteine 81. Residues histidine 176 and glutamate 178 contribute to the active site. The region spanning 203–395 (WVMKDHIEEA…LGLPPEMVYR (193 aa)) is the GMPS ATP-PPase domain. 230-236 (SGGVDSS) lines the ATP pocket.

In terms of assembly, homodimer.

It catalyses the reaction XMP + L-glutamine + ATP + H2O = GMP + L-glutamate + AMP + diphosphate + 2 H(+). The protein operates within purine metabolism; GMP biosynthesis; GMP from XMP (L-Gln route): step 1/1. In terms of biological role, catalyzes the synthesis of GMP from XMP. This is GMP synthase [glutamine-hydrolyzing] from Cupriavidus pinatubonensis (strain JMP 134 / LMG 1197) (Cupriavidus necator (strain JMP 134)).